Consider the following 299-residue polypeptide: Protoheme IX farnesyltransferase (299 aa).

The next 9 membrane-spanning stretches (helical) occupy residues Val27–Phe47, Leu53–Ile73, Phe97–Trp117, Leu121–Leu141, Ile149–Gly169, Ala175–Ile195, Ile222–Ala242, Tyr244–Leu264, and Ala273–Leu293.

The protein belongs to the UbiA prenyltransferase family. Protoheme IX farnesyltransferase subfamily.

Its subcellular location is the cell inner membrane. It carries out the reaction heme b + (2E,6E)-farnesyl diphosphate + H2O = Fe(II)-heme o + diphosphate. It participates in porphyrin-containing compound metabolism; heme O biosynthesis; heme O from protoheme: step 1/1. Converts heme B (protoheme IX) to heme O by substitution of the vinyl group on carbon 2 of heme B porphyrin ring with a hydroxyethyl farnesyl side group. The protein is Protoheme IX farnesyltransferase of Vibrio vulnificus (strain CMCP6).